We begin with the raw amino-acid sequence, 375 residues long: uncharacterized protein (375 aa).

Residues 54–78 (EGIPPPTQSQEPLKPQENISRPIHH) form a disordered region.

This is an uncharacterized protein from Bos taurus (Bovine).